Here is a 124-residue protein sequence, read N- to C-terminus: Aspartate 1-decarboxylase (124 aa).

S21 functions as the Schiff-base intermediate with substrate; via pyruvic acid in the catalytic mechanism. At S21 the chain carries Pyruvic acid (Ser). T53 contributes to the substrate binding site. Y54 serves as the catalytic Proton donor. Residue 69-71 participates in substrate binding; it reads GAA.

This sequence belongs to the PanD family. In terms of assembly, heterooctamer of four alpha and four beta subunits. It depends on pyruvate as a cofactor. In terms of processing, is synthesized initially as an inactive proenzyme, which is activated by self-cleavage at a specific serine bond to produce a beta-subunit with a hydroxyl group at its C-terminus and an alpha-subunit with a pyruvoyl group at its N-terminus.

It is found in the cytoplasm. The enzyme catalyses L-aspartate + H(+) = beta-alanine + CO2. Its pathway is cofactor biosynthesis; (R)-pantothenate biosynthesis; beta-alanine from L-aspartate: step 1/1. Its function is as follows. Catalyzes the pyruvoyl-dependent decarboxylation of aspartate to produce beta-alanine. The sequence is that of Aspartate 1-decarboxylase from Dehalococcoides mccartyi (strain CBDB1).